Reading from the N-terminus, the 513-residue chain is Maturase K (513 aa).

The protein belongs to the intron maturase 2 family. MatK subfamily.

The protein resides in the plastid. It localises to the chloroplast. Usually encoded in the trnK tRNA gene intron. Probably assists in splicing its own and other chloroplast group II introns. In Typha angustifolia (Narrow leaf cattail), this protein is Maturase K.